The sequence spans 195 residues: Imidazoleglycerol-phosphate dehydratase (195 aa).

This sequence belongs to the imidazoleglycerol-phosphate dehydratase family.

The protein localises to the cytoplasm. It carries out the reaction D-erythro-1-(imidazol-4-yl)glycerol 3-phosphate = 3-(imidazol-4-yl)-2-oxopropyl phosphate + H2O. It participates in amino-acid biosynthesis; L-histidine biosynthesis; L-histidine from 5-phospho-alpha-D-ribose 1-diphosphate: step 6/9. This Geobacter sp. (strain M21) protein is Imidazoleglycerol-phosphate dehydratase.